A 389-amino-acid chain; its full sequence is Chitin-binding protein CbpD (389 aa).

The signal sequence occupies residues 1 to 25 (MKHYSATLALLPLTLALFLPQAAHA). A Chitin-binding type-4 domain is found at 26–208 (HGSMETPPSR…EAFYACIDVS (183 aa)).

In terms of processing, can be detected in the extracellular supernatant as a 43 kDa protein and a 23 kDa protein, both proteins have the same N-terminus. Only the larger protein binds chitin, which may protect it from further processing and/or degradation by elastase (lasB). It is not clear whether the short form is functional or a degradation product.

The protein resides in the secreted. In terms of biological role, binds chitin but does not hydrolyze it, has no detectable protease or staphylolytic activity. This chain is Chitin-binding protein CbpD, found in Pseudomonas aeruginosa (strain ATCC 15692 / DSM 22644 / CIP 104116 / JCM 14847 / LMG 12228 / 1C / PRS 101 / PAO1).